The chain runs to 245 residues: Zinc finger CCCH domain-containing protein 54 (245 aa).

The C3H1-type zinc-finger motif lies at 92 to 119 (TYCAVACPAFRNGACHRGDSCEFAHGVF). The segment at 175–204 (GNGDGVTMRMDDEGYDTSRSPVRSGKDDLD) is disordered.

As to quaternary structure, interacts with MARD1/FLZ9 and RD21A. In terms of tissue distribution, specifically expressed in embryo (at protein level).

It is found in the nucleus. In terms of biological role, embryo-specific transcription factor required at the globular to heart stage transition in embryo development. The polypeptide is Zinc finger CCCH domain-containing protein 54 (Arabidopsis thaliana (Mouse-ear cress)).